The primary structure comprises 346 residues: KH domain-containing, RNA-binding, signal transduction-associated protein 3 (346 aa).

The involved in homodimerization stretch occupies residues 1–160 (MEEKYLPELM…IKKFLIPDYN (160 aa)). Residue K4 forms a Glycyl lysine isopeptide (Lys-Gly) (interchain with G-Cter in SUMO2) linkage. A KH domain is found at 61–127 (LIPVKQFPKF…AKYFHLNDDL (67 aa)). Residues 212–251 (RPVGVVVPRGTPTPRGVLSTRGPVSRGRGLLTPRARGVPP) form an interaction with SIAH1 region. Positions 213–228 (PVGVVVPRGTPTPRGV) are enriched in low complexity. Disordered stretches follow at residues 213–267 (PVGV…ETYG) and 318–346 (QEEWTNSRHKAPSARTAKGVYRDQPYGRY). A compositionally biased stretch (pro residues) spans 253–262 (GYRPPPPPPT).

This sequence belongs to the KHDRBS family. As to quaternary structure, self-associates to form homooligomers; dimerization increases RNA affinity. Interacts with KHDRBS2/SLM-1. Interacts with KHDRBS1/SAM68; heterooligomer formation of KHDRBS family proteins may modulate RNA substrate specificity. Interacts with the splicing regulatory proteins SFRS9, SAFB and YTHDC1. Interacts with HNRPL. Interacts with RBMX, RBMY1A1, p85 subunit of PI3-kinase, SERPINB5. Interacts with SIAH1 which promotes targeting for degradation. In terms of processing, phosphorylated on tyrosine residues. Isoform 1 C-terminal region is tyrosine-rich, but isoform 2 lacking this C-terminal region is also tyrosine-phosphorylated. In terms of tissue distribution, ubiquitous with higher expression in testis, skeletal muscle and brain. Expressed in the kidney only in podocytes, the glomerular epithelial cells of the kidney. Strongly expressed after meiosis.

Its subcellular location is the nucleus. Functionally, RNA-binding protein that plays a role in the regulation of alternative splicing and influences mRNA splice site selection and exon inclusion. Binds preferentially to the 5'-[AU]UAAA-3' motif in vitro. Binds optimally to RNA containing 5'-[AU]UAA-3' as a bipartite motif spaced by more than 15 nucleotides. Binds poly(A). RNA-binding abilities are down-regulated by tyrosine kinase PTK6. Involved in splice site selection of vascular endothelial growth factor. In vitro regulates CD44 alternative splicing by direct binding to purine-rich exonic enhancer. Can regulate alternative splicing of neurexins NRXN1-3 in the laminin G-like domain 6 containing the evolutionary conserved neurexin alternative spliced segment 4 (AS4) involved in neurexin selective targeting to postsynaptic partners such as neuroligins and LRRTM family members. Targeted, cell-type specific splicing regulation of NRXN1 at AS4 is involved in neuronal glutamatergic synapse function and plasticity. May regulate expression of KHDRBS2/SLIM-1 in defined brain neuron populations by modifying its alternative splicing. Can bind FABP9 mRNA. May play a role as a negative regulator of cell growth. Inhibits cell proliferation. In terms of biological role, (Microbial infection) Involved in post-transcriptional regulation of HIV-1 gene expression. This Homo sapiens (Human) protein is KH domain-containing, RNA-binding, signal transduction-associated protein 3 (KHDRBS3).